Consider the following 51-residue polypeptide: MEKLTTELHSLSEMDRRHVVSILAEIANGYDDFNDMLIYLEFYPNHKILIS.

This chain is Protein YrhD (yrhD), found in Escherichia coli (strain K12).